The chain runs to 330 residues: Ferredoxin--NADP reductase (330 aa).

Residues Thr18, Glu37, Gln45, Tyr50, Val90, Phe124, Asp286, and Thr327 each coordinate FAD.

This sequence belongs to the ferredoxin--NADP reductase type 2 family. As to quaternary structure, homodimer. FAD is required as a cofactor.

It catalyses the reaction 2 reduced [2Fe-2S]-[ferredoxin] + NADP(+) + H(+) = 2 oxidized [2Fe-2S]-[ferredoxin] + NADPH. The protein is Ferredoxin--NADP reductase of Halalkalibacterium halodurans (strain ATCC BAA-125 / DSM 18197 / FERM 7344 / JCM 9153 / C-125) (Bacillus halodurans).